The primary structure comprises 476 residues: MAPGPARISLGSQLLPMVPLLLLLRGAGCGHRGPSWSSLPSAAAGLQGDRDSQQSPGDAAAALGPGAQDMVAIHMLRLYEKYNRRGAPPGGGNTVRSFRARLEMIDQKPVYFFNLTSMQDSEMILTAAFHFYSEPPRWPRAREVFCKPRAKNASCRLLTPGLPARLHLIFRSLSQNTATQGLLRGAMALTPPPRGLWQAKDISSIIKAARRDGELLLSAQLDTGEKDPGVPRPSSHMPYILVYANDLAISEPNSVAVSLQRYDPFPAGDFEPGAAPNSSADPRVRRAAQVSKPLQDNELPGLDERPAPALHAQNFHKHEFWSSPFRALKPRTGRKDRKKKDQDTFTAASSQVLDFDEKTMQKARRRQWDEPRVCSRRYLKVDFADIGWNEWIISPKSFDAYYCAGACEFPMPKIVRPSNHATIQSIVRAVGIVPGIPEPCCVPDKMNSLGVLFLDENRNAVLKVYPNMSVETCACR.

An N-terminal signal peptide occupies residues 1-29 (MAPGPARISLGSQLLPMVPLLLLLRGAGC). Positions 30-366 (GHRGPSWSSL…EKTMQKARRR (337 aa)) are excised as a propeptide. The tract at residues 39-63 (LPSAAAGLQGDRDSQQSPGDAAAAL) is disordered. N-linked (GlcNAc...) asparagine glycosylation is found at Asn114, Asn152, and Asn277. A disordered region spans residues 268-301 (GDFEPGAAPNSSADPRVRRAAQVSKPLQDNELPG). 3 cysteine pairs are disulfide-bonded: Cys374-Cys441, Cys403-Cys473, and Cys407-Cys475. Asn467 carries N-linked (GlcNAc...) asparagine glycosylation.

It belongs to the TGF-beta family. In terms of assembly, homodimer or heterodimer. Can form a non-covalent complex of the mature region and the pro-region. In terms of tissue distribution, highly expressed in epididymal adipose tissue, brain, bone and aorta and to a lesser extent in liver and spleen. Expressed at higher levels in preadipocytes than in mature adipocytes. Strongly expressed in glial cells of the cerebellum.

The protein resides in the secreted. Functionally, growth factor involved in osteogenesis and adipogenesis. Plays an inhibitory role in the process of osteoblast differentiation via SMAD2/3 pathway. Plays an inhibitory role in the process of adipogenesis. The chain is Growth/differentiation factor 10 from Mus musculus (Mouse).